Consider the following 294-residue polypeptide: Major pollen allergen Pha a 5.3 (294 aa).

The signal sequence occupies residues 1-25 (MAVQKYTVALFLAMALVAGPAASYA).

Belongs to the Poa p IX/Phl p VI allergen family.

The chain is Major pollen allergen Pha a 5.3 from Phalaris aquatica (Canary grass).